The primary structure comprises 1547 residues: Fatty acid synthase subunit alpha (1547 aa).

Residues 94–121 form a disordered region; that stretch reads TLPEAHPPPPIDSHQEPSTQTQATHRSA. The segment covering 109–118 has biased composition (polar residues); sequence EPSTQTQATH. The 77-residue stretch at 145–221 folds into the Carrier domain; that stretch reads LPVSTIVRSL…ETMSIGHNGR (77 aa). Serine 180 is subject to O-(pantetheine 4'-phosphoryl)serine. Positions 563–798 are ketoreductase (KR) domain; it reads GKNVLITGAG…ATLMGGTITT (236 aa). In terms of domain architecture, Ketosynthase family 3 (KS3) spans 1004–1476; the sequence is KESLQEIVLQ…QKGSQAILIH (473 aa). Active-site for beta-ketoacyl synthase activity residues include cysteine 1190 and histidine 1442.

This sequence belongs to the thiolase-like superfamily. Fungal fatty acid synthetase subunit alpha family. Requires pantetheine 4'-phosphate as cofactor.

The catalysed reaction is acetyl-CoA + n malonyl-CoA + 2n NADPH + 4n H(+) = a long-chain-acyl-CoA + n CoA + n CO2 + 2n NADP(+).. It catalyses the reaction a fatty acyl-[ACP] + malonyl-[ACP] + H(+) = a 3-oxoacyl-[ACP] + holo-[ACP] + CO2. The enzyme catalyses a (3R)-hydroxyacyl-[ACP] + NADP(+) = a 3-oxoacyl-[ACP] + NADPH + H(+). It functions in the pathway mycotoxin biosynthesis; HC-toxin biosynthesis. In terms of biological role, fatty acid synthase alpha subunit, part of the diffuse TOX2 gene cluster that mediates the biosynthesis of the HC-toxin, cyclic tetrapeptide of structure cyclo(D-Pro-L-Ala-D-Ala-L-Aeo), where Aeo stands for 2-amino-9,10-epoxi-8-oxodecanoic acid. HC-toxin is a determinant of specificity and virulence in the interaction between the producing fungus and its host, maize. TOXH contribute to the synthesis of the decanoic backbone of 2-amino-9,10-epoxi-8-oxodecanoic acid, an essential precursor for the production of the major forms of HC-toxin by the non-ribosomal peptide synthetase HTS1. The sequence is that of Fatty acid synthase subunit alpha from Cochliobolus carbonum (Maize leaf spot fungus).